We begin with the raw amino-acid sequence, 373 residues long: Flagellar P-ring protein (373 aa).

Residues 1 to 30 (MTNRWSFDVNKNLVTVLFTWLCLSISTAHA) form the signal peptide.

This sequence belongs to the FlgI family. As to quaternary structure, the basal body constitutes a major portion of the flagellar organelle and consists of four rings (L,P,S, and M) mounted on a central rod.

It is found in the periplasm. The protein resides in the bacterial flagellum basal body. Its function is as follows. Assembles around the rod to form the L-ring and probably protects the motor/basal body from shearing forces during rotation. This chain is Flagellar P-ring protein, found in Aliivibrio fischeri (strain ATCC 700601 / ES114) (Vibrio fischeri).